The following is a 333-amino-acid chain: 4-hydroxy-3-methylbut-2-enyl diphosphate reductase (333 aa).

Position 33 (Cys33) interacts with [4Fe-4S] cluster. (2E)-4-hydroxy-3-methylbut-2-enyl diphosphate-binding residues include His62 and His95. Positions 62 and 95 each coordinate dimethylallyl diphosphate. Isopentenyl diphosphate contacts are provided by His62 and His95. Cys117 contacts [4Fe-4S] cluster. (2E)-4-hydroxy-3-methylbut-2-enyl diphosphate is bound at residue His145. A dimethylallyl diphosphate-binding site is contributed by His145. His145 is an isopentenyl diphosphate binding site. Glu147 (proton donor) is an active-site residue. Thr186 contributes to the (2E)-4-hydroxy-3-methylbut-2-enyl diphosphate binding site. Cys216 contributes to the [4Fe-4S] cluster binding site. 4 residues coordinate (2E)-4-hydroxy-3-methylbut-2-enyl diphosphate: Ser244, Ser245, Asn246, and Ser289. Residues Ser244, Ser245, Asn246, and Ser289 each contribute to the dimethylallyl diphosphate site. Isopentenyl diphosphate contacts are provided by Ser244, Ser245, Asn246, and Ser289.

It belongs to the IspH family. [4Fe-4S] cluster serves as cofactor.

It carries out the reaction isopentenyl diphosphate + 2 oxidized [2Fe-2S]-[ferredoxin] + H2O = (2E)-4-hydroxy-3-methylbut-2-enyl diphosphate + 2 reduced [2Fe-2S]-[ferredoxin] + 2 H(+). It catalyses the reaction dimethylallyl diphosphate + 2 oxidized [2Fe-2S]-[ferredoxin] + H2O = (2E)-4-hydroxy-3-methylbut-2-enyl diphosphate + 2 reduced [2Fe-2S]-[ferredoxin] + 2 H(+). It participates in isoprenoid biosynthesis; dimethylallyl diphosphate biosynthesis; dimethylallyl diphosphate from (2E)-4-hydroxy-3-methylbutenyl diphosphate: step 1/1. The protein operates within isoprenoid biosynthesis; isopentenyl diphosphate biosynthesis via DXP pathway; isopentenyl diphosphate from 1-deoxy-D-xylulose 5-phosphate: step 6/6. Its function is as follows. Catalyzes the conversion of 1-hydroxy-2-methyl-2-(E)-butenyl 4-diphosphate (HMBPP) into a mixture of isopentenyl diphosphate (IPP) and dimethylallyl diphosphate (DMAPP). Acts in the terminal step of the DOXP/MEP pathway for isoprenoid precursor biosynthesis. The sequence is that of 4-hydroxy-3-methylbut-2-enyl diphosphate reductase from Corynebacterium diphtheriae (strain ATCC 700971 / NCTC 13129 / Biotype gravis).